Consider the following 65-residue polypeptide: Putative beta-neurotoxin RjAa2 (65 aa).

Residues lysine 1–glycine 64 form the LCN-type CS-alpha/beta domain. Intrachain disulfides connect cysteine 11-cysteine 63, cysteine 15-cysteine 37, cysteine 22-cysteine 44, and cysteine 26-cysteine 46.

This sequence belongs to the long (4 C-C) scorpion toxin superfamily. Sodium channel inhibitor family. Beta subfamily. In terms of tissue distribution, expressed by the venom gland.

It is found in the secreted. Functionally, beta toxins bind voltage-independently at site-4 of sodium channels (Nav) and shift the voltage of activation toward more negative potentials thereby affecting sodium channel activation and promoting spontaneous and repetitive firing. The sequence is that of Putative beta-neurotoxin RjAa2 from Rhopalurus junceus (Caribbean blue scorpion).